Reading from the N-terminus, the 94-residue chain is Selenoprotein K (94 aa).

Residues 20–42 (LSFITDFFWGIAEFVVLFFRTLL) form a helical membrane-spanning segment. A disordered region spans residues 48 to 94 (KRRGYGGSSDSRYDDGRGPPGNPPRRMGRINHLRGPNPPPMAGGUGR). Position 92 (selenocysteine 92) is a non-standard amino acid, selenocysteine.

The protein belongs to the selenoprotein K family. Interacts with DERL1, DERL2, DERL3 and SELENOS. The SELENOK-SELENOS complex interacts with VCP. Interacts with ZDHHC6. Post-translationally, cleaved by CAPN2/m-calpain in resting macrophages but not in activated macrophages. Macrophage activation up-regulates expression of the calpain inhibitor CAST/calpastatin, resulting in inhibition of CAPN2 activity. In terms of processing, truncated SELENOK proteins produced by failed UGA/Sec decoding are ubiquitinated by the CRL2(KLHDC2) complex, which recognizes the diglycine (Gly-Gly) at the C-terminus of truncated SELENOK proteins.

It localises to the endoplasmic reticulum membrane. Its subcellular location is the cell membrane. In terms of biological role, required for Ca(2+) flux in immune cells and plays a role in T-cell proliferation and in T-cell and neutrophil migration. Involved in endoplasmic reticulum-associated degradation (ERAD) of soluble glycosylated proteins. Required for palmitoylation and cell surface expression of CD36 and involved in macrophage uptake of low-density lipoprotein and in foam cell formation. Together with ZDHHC6, required for palmitoylation of ITPR1 in immune cells, leading to regulate ITPR1 stability and function. Plays a role in protection of cells from ER stress-induced apoptosis. Protects cells from oxidative stress when overexpressed in cardiomyocytes. This Sus scrofa (Pig) protein is Selenoprotein K.